The primary structure comprises 346 residues: RNA-directed DNA methylation 4 (346 aa).

Methionine 1 is subject to N-acetylmethionine. Acidic residues-rich tracts occupy residues 253–268 (FCDGSDESDYDSEDSN), 278–312 (PEEEEEEEEEDDDDDDDDESEEEKSEASDESDDEE), and 323–332 (GDDEFDDYAE). The segment at 253–346 (FCDGSDESDY…YSESDEEFES (94 aa)) is disordered.

It belongs to the IWR1/SLC7A6OS family. As to quaternary structure, interacts with NRPD1. Associates with Pol II and Pol V complexes.

Functionally, probable regulatory factor for several RNA polymerases. Effector involved in facilitation of Pol V transcription as RNA scaffold and recruitment of silencing complex to target genomic sites. The chain is RNA-directed DNA methylation 4 (RDM4) from Arabidopsis thaliana (Mouse-ear cress).